Here is a 592-residue protein sequence, read N- to C-terminus: MSNTGSARTEEFTKGTGYEATKPNNDTDDDAKQNYPSKEPHMKLGDYTEETSFVDDSIFKREELTPDRNSPANDVEKMEVPKPTPQWMKLKDEGKLGKHRKNRLRRPGRFPVRQESTIDIPGLTVSKRTENDSNNASYGIREKLIIILVGIPATGKSYIGSKLSRYYNWLKYNCRFFSVGDKRREEGASTYSMSADFFDIKNEETFKFRENVALETLEDLLHWMIHENGVIGILDATNSTHERRKHLYDRISKEADIGIMFLESLCTDDILFEENIKLKIKGPDYEGYDTESALKDLRERVDLYKKYYEPLDERDEQLPFLQYVKVINVGIKVVTHNIEGFLAGQAVYFMLNLNIQKRQIWLTRPGESLDTVAGRIGGDASLTPIGKQYAQDLANFMDRQRVLWQLRYTNDLASTNKRFSLSEASSFNVWSSVRKRAIETIEFFNPDSYNVKKIRLLNDLNLGSREGLTLREFSEKYPDEFDVIKRKDYAYRFSGQGGESYLDVIHRLQPLIVEIERSSGNILVVSHRIVSNILMTYFLNYHPEDIIDVGLPLHTLFCIESDRYGTTCMAYRYDAANRQFIKDPMFDLRKRT.

Residues 1–80 (MSNTGSARTE…PANDVEKMEV (80 aa)) are disordered. Basic and acidic residues predominate over residues 57-66 (SIFKREELTP). 150 to 157 (GIPATGKS) provides a ligand contact to ATP. Active-site residues include D235 and C266. R300 provides a ligand contact to beta-D-fructose 6-phosphate. Catalysis depends on H527, which acts as the Proton donor.

It is found in the cytoplasm. It localises to the nucleus. It catalyses the reaction beta-D-fructose 6-phosphate + ATP = beta-D-fructose 2,6-bisphosphate + ADP + H(+). In terms of biological role, synthesis of fructose 2,6-bisphosphate. This chain is Probable 6-phosphofructo-2-kinase C222.13c, found in Schizosaccharomyces pombe (strain 972 / ATCC 24843) (Fission yeast).